The sequence spans 516 residues: L-amino-acid oxidase (516 aa).

Positions 1 to 18 are cleaved as a signal peptide; it reads MNVFFMFSLLFLAALGSC. Cysteines 28 and 191 form a disulfide. Residues 61–62, 81–82, arginine 89, and 105–108 each bind FAD; these read MA, EA, and GPMR. A substrate-binding site is contributed by arginine 108. N-linked (GlcNAc...) (complex) asparagine glycosylation is present at asparagine 190. Substrate is bound at residue histidine 241. Valine 279 is a binding site for FAD. Cysteines 349 and 430 form a disulfide. Asparagine 379 carries N-linked (GlcNAc...) (complex) asparagine glycosylation. Tyrosine 390 is a binding site for substrate. FAD-binding positions include glutamate 475 and 482–487; that span reads GWIDST. Residue 482-483 participates in substrate binding; that stretch reads GW.

As to quaternary structure, homodimer; non-covalently linked. FAD is required as a cofactor. N-glycosylated at Asn-190 and Asn-379 with bis-sialylated, biantennary, core-fucosylated dodecasaccharide (composed of N-acetylglucosamine, fucose, mannose, galactose, and sialic acid residues). In terms of tissue distribution, expressed by the venom gland.

The protein resides in the secreted. It catalyses the reaction an L-alpha-amino acid + O2 + H2O = a 2-oxocarboxylate + H2O2 + NH4(+). It carries out the reaction L-leucine + O2 + H2O = 4-methyl-2-oxopentanoate + H2O2 + NH4(+). The catalysed reaction is L-phenylalanine + O2 + H2O = 3-phenylpyruvate + H2O2 + NH4(+). The enzyme catalyses L-tryptophan + O2 + H2O = indole-3-pyruvate + H2O2 + NH4(+). It catalyses the reaction L-methionine + O2 + H2O = 4-methylsulfanyl-2-oxobutanoate + H2O2 + NH4(+). It carries out the reaction L-isoleucine + O2 + H2O = (S)-3-methyl-2-oxopentanoate + H2O2 + NH4(+). The catalysed reaction is L-arginine + O2 + H2O = 5-guanidino-2-oxopentanoate + H2O2 + NH4(+). The enzyme catalyses L-aspartate + O2 + H2O = oxaloacetate + H2O2 + NH4(+). It catalyses the reaction L-histidine + O2 + H2O = 3-(imidazol-5-yl)pyruvate + H2O2 + NH4(+). It carries out the reaction L-2-aminohexanoate + O2 + H2O = 2-oxohexanoate + H2O2 + NH4(+). The catalysed reaction is L-2-aminopentanoate + O2 + H2O = 2-oxopentanoate + H2O2 + NH4(+). Functionally, catalyzes an oxidative deamination of predominantly hydrophobic and aromatic L-amino acids, thus producing hydrogen peroxide that may contribute to the diverse toxic effects of this enzyme. Shows high affinity for L-Phe, L-Trp, L-Met, L-Leu, and L-Ile, moderate affinity for L-Arg, L-Asp, and L-His, and very low affinity for L-Gln, L-Lys, and L-Ala. Also shows high activity on L-norleucine (L-2-aminohexanoate), and L-norvaline (L-2-aminopentanoate) and a weak activity on L-ornithine and L-aminobutyric acid. Also exhibits diverse biological activities, such as hemorrhage, hemolysis, edema, apoptosis of vascular endothelial cells or tumor cell lines, and antiparasitic activities, as well as regulation of platelet aggregation. Its effect on platelets is controversial, since it either induces aggregation or inhibits agonist-induced aggregation. These different effects are probably due to different experimental conditions. A possible explanation of high efficacy it that LAAO may bind to target cells through its sialylated glycan moiety that would bind to sialic acid-binding lectins (siglec) on target cells. This interaction may result in production of locally high concentrations of hydrogen peroxide in or near the binding interface, leading, in turn to oxidative damage of the siglec or another adjacent cell structural elements. The chain is L-amino-acid oxidase from Calloselasma rhodostoma (Malayan pit viper).